We begin with the raw amino-acid sequence, 538 residues long: Syncytin-1 (538 aa).

An N-terminal signal peptide occupies residues 1–20; it reads MALPYHIFLFTVLLPSFTLT. Topologically, residues 31–443 are extracellular; sequence SSPYQEFLWR…NIGPWGLLSQ (413 aa). Asparagine 169 is a glycosylation site (N-linked (GlcNAc...) asparagine). Positions 186-189 match the CXXC motif; sequence CWMC. Cystine bridges form between cysteine 186–cysteine 189, cysteine 186–cysteine 405, and cysteine 397–cysteine 404. N-linked (GlcNAc...) asparagine glycosylation is found at asparagine 208, asparagine 214, asparagine 234, asparagine 242, and asparagine 281. The interval 320-340 is fusion peptide; the sequence is ILPFVMGAGVLGALGTGIGSI. An immunosuppression region spans residues 380-396; sequence LQNRRALDLLTAERGGT. Positions 397-405 match the CX6CC motif; that stretch reads CLFLGEECC. A glycan (N-linked (GlcNAc...) asparagine) is linked at asparagine 409. A helical transmembrane segment spans residues 444–464; the sequence is WMPWILPFLGPLAAIILLLLF. An essential for the fusiogenic function region spans residues 465-484; that stretch reads GPCIFNLLVNFVSSRIEAIK. Residues 465 to 538 lie on the Cytoplasmic side of the membrane; it reads GPCIFNLLVN…LLRPNSAGSS (74 aa). Positions 494–538 are disordered; that stretch reads KTKNYRRSLDWPASPRSDVNDIKGIPPEEISTAQPLLRPNSAGSS.

Belongs to the gamma type-C retroviral envelope protein family. HERV class-I W env subfamily. In terms of assembly, the mature envelope protein (Env) consists of a trimer of SU-TM heterodimers attached probably by a labile interchain disulfide bond. Interacts with the C-type lectin CD209/DC-SIGN. Specific enzymatic cleavages in vivo yield mature proteins. Envelope glycoproteins are synthesized as an inactive precursor that is heavily N-glycosylated and processed likely by furin in the Golgi to yield the mature SU and TM proteins. The cleavage site between SU and TM requires the minimal sequence [KR]-X-[KR]-R. Post-translationally, the CXXC motif is highly conserved across a broad range of retroviral envelope proteins. It is thought to participate in the formation of a labile disulfide bond possibly with the CX6CC motif present in the transmembrane protein.

Its subcellular location is the cell membrane. The protein localises to the virion. In terms of biological role, this endogenous retroviral envelope protein has retained its original fusogenic properties and participates in trophoblast fusion and the formation of a syncytium during placenta morphogenesis. May recognize and induce fusion through binding of SLC1A4 and SLC1A5. Functionally, endogenous envelope proteins may have kept, lost or modified their original function during evolution. Retroviral envelope proteins mediate receptor recognition and membrane fusion during early infection. The surface protein (SU) mediates receptor recognition, while the transmembrane protein (TM) acts as a class I viral fusion protein. The protein may have at least 3 conformational states: pre-fusion native state, pre-hairpin intermediate state, and post-fusion hairpin state. During viral and target cell membrane fusion, the coiled coil regions (heptad repeats) assume a trimer-of-hairpins structure, positioning the fusion peptide in close proximity to the C-terminal region of the ectodomain. The formation of this structure appears to drive apposition and subsequent fusion of membranes. In Hylobates pileatus (Pileated gibbon), this protein is Syncytin-1 (ERVW-1).